Here is a 290-residue protein sequence, read N- to C-terminus: N-acetylmannosamine kinase (290 aa).

Residues 6-13 (ALDIGGTK) and 132-139 (GVGGGIIL) contribute to the ATP site. Residues H156, C166, C168, and C173 each coordinate Zn(2+).

It belongs to the ROK (NagC/XylR) family. NanK subfamily. In terms of assembly, homodimer.

The enzyme catalyses an N-acyl-D-mannosamine + ATP = an N-acyl-D-mannosamine 6-phosphate + ADP + H(+). It functions in the pathway amino-sugar metabolism; N-acetylneuraminate degradation; D-fructose 6-phosphate from N-acetylneuraminate: step 2/5. In terms of biological role, catalyzes the phosphorylation of N-acetylmannosamine (ManNAc) to ManNAc-6-P. This chain is N-acetylmannosamine kinase, found in Yersinia pseudotuberculosis serotype O:3 (strain YPIII).